Reading from the N-terminus, the 67-residue chain is Protein AaeX (67 aa).

A run of 2 helical transmembrane segments spans residues 3 to 23 (LFPVIVVFGLSFPPIFFELLL) and 43 to 63 (FVWHPALFNTALYCCLFYLIS).

It belongs to the AaeX family.

The protein localises to the cell membrane. This Escherichia coli O1:K1 / APEC protein is Protein AaeX.